The chain runs to 189 residues: MGDKIFHNLSGKTLVATPHVITKGIYHKSLIYMLSHTEEGAIGLIFNRLVNHIDLKSFFKIKNDEITTPVMVPIYLGGPVEHEKGFFLHSSDYNKNLLLDFHNDLAVSSNLEISEDIAFGKGPKNSLFIVGYTAWKPGQLEEELETNLWLVMDCNKEFIFADNPESKWHNALKHLGIDEIHFSSQIGNA.

This sequence belongs to the UPF0301 (AlgH) family.

The protein is UPF0301 protein RC0043 of Rickettsia conorii (strain ATCC VR-613 / Malish 7).